Reading from the N-terminus, the 897-residue chain is MINNKPSLDWLENPEIFRVNRIDAHSDTWFYEKFEDVKLEDTMPLKQNLNGKWRFSYSENSSLRIKEFYKDEFDVSWIDYIEVPGHIQLQGYDKCQYINTMYPWEGHDELRPPHISKTYNPVGSYVTFFEVKDELKNKQTFISFQGVETAFYVWVNGEFVGYSEDTFTPSEFDITDYLREGENKLAVEVYKRSSASWIEDQDFWRFSGIFRDVYLYAVPETHVNDIFIKTDLYDDFKNAKLNAELKMIGNSETTVETYLEDKEGNKIAISEKIPFSDELTLYLDAQNINLWSAEEPNLYTLYILVNKKDGNLIEVVTQKIGFRHFEMKDKIMCLKWKRIIFKGVNRHEFSARRGRSITKEDMLWDIKFLKQHNINAVRTSHYPNQSLWYRLCDEYGIYLIDETNLESHGSWQKMGQIEPSWNVPGSLPQWQAAVLDRASSMVERDKNHPSVLIWSCGNESYAGEDIYQMSKYFRKKDPSRLVHYEGVTRCREFMTRRHESRMYAKAAEIEEYLNDNPKKPYISCEYMHSMGNSTGGMMKYTELEDKYLMYQGGFIWDYGDQALYRKLPDGKEVLAYGGDFTDRPTDYNFSGNGLIYADRTISPKAQEVKYLYQNVKLEPDEKGVTIKNQNLFVNTDKYDLYYIVERDGKLIKDGYLNVSVAPDEEKYIELPIGNYNFPEEIVLTTSLRLAQATLWAEKGYEIAFGQKVIKEKSDMNNHNSESKMKIIHGDVNIGVHGKDFKAIFSKQEGGIVSLRYNNKEFITRTPKTFYWRATTDNDRGNRHEFRCSQWLAATMGQKYVDFSVEEFDEKITLYYTYQLPTVPSTNVKITYEVSGEGIIKVNVKYKGVSGLPELPVLGMDFKLLAEFNSFSWYGMGPEENYIDRCEGAKLGIYESTQ.

The active-site Proton donor is the E459. Residue E525 is the Nucleophile of the active site.

The protein belongs to the glycosyl hydrolase 2 family.

It catalyses the reaction Hydrolysis of terminal non-reducing beta-D-galactose residues in beta-D-galactosides.. The protein is Beta-galactosidase (cbgA) of Clostridium acetobutylicum.